The primary structure comprises 362 residues: tRNA-specific 2-thiouridylase MnmA 3 (362 aa).

ATP-binding positions include 11–18 (GMSGGIDS) and methionine 37. Cysteine 91 acts as the Nucleophile in catalysis. Cysteine 91 and cysteine 188 form a disulfide bridge. Residue glycine 115 participates in ATP binding. Positions 137 to 139 (KDQ) are interaction with tRNA. Catalysis depends on cysteine 188, which acts as the Cysteine persulfide intermediate. The interaction with tRNA stretch occupies residues 296-297 (RY).

The protein belongs to the MnmA/TRMU family.

It localises to the cytoplasm. It carries out the reaction S-sulfanyl-L-cysteinyl-[protein] + uridine(34) in tRNA + AH2 + ATP = 2-thiouridine(34) in tRNA + L-cysteinyl-[protein] + A + AMP + diphosphate + H(+). Its function is as follows. Catalyzes the 2-thiolation of uridine at the wobble position (U34) of tRNA, leading to the formation of s(2)U34. This Bacteroides fragilis (strain ATCC 25285 / DSM 2151 / CCUG 4856 / JCM 11019 / LMG 10263 / NCTC 9343 / Onslow / VPI 2553 / EN-2) protein is tRNA-specific 2-thiouridylase MnmA 3.